The primary structure comprises 204 residues: Regulatory protein RecX (204 aa).

The segment covering 1 to 22 (MTKSSRPQSISDSVSVAGSQGT) has biased composition (polar residues). Residues 1 to 44 (MTKSSRPQSISDSVSVAGSQGTLDDLRARVASVPEAPTREPVDS) form a disordered region.

The protein belongs to the RecX family.

It localises to the cytoplasm. Its function is as follows. Modulates RecA activity. This is Regulatory protein RecX from Mycobacteroides abscessus (strain ATCC 19977 / DSM 44196 / CCUG 20993 / CIP 104536 / JCM 13569 / NCTC 13031 / TMC 1543 / L948) (Mycobacterium abscessus).